Reading from the N-terminus, the 191-residue chain is Protein RER1A (191 aa).

Residue Met-1 is modified to N-acetylmethionine. The next 4 helical transmembrane spans lie at 39–57 (YRWI…RVYY), 60–80 (GFYI…IGFL), 115–135 (FKFW…TFFS), and 136–156 (VFDV…LFVL).

It belongs to the RER1 family.

The protein localises to the membrane. Functionally, involved in the retrieval of endoplasmic reticulum membrane proteins from the early Golgi compartment. The sequence is that of Protein RER1A (RER1A) from Arabidopsis thaliana (Mouse-ear cress).